The chain runs to 306 residues: Glutathione transport system permease protein GsiC (306 aa).

Over 1-8 (MLNYVIKR) the chain is Cytoplasmic. Residues 9–29 (LLGLIPTLFIVSVLVFLFVHM) traverse the membrane as a helical segment. The Periplasmic portion of the chain corresponds to 30 to 102 (LPGDPARLIA…SRFMPTLWLT (73 aa)). Residues 95 to 292 (FMPTLWLTIT…LEFILINLVV (198 aa)) enclose the ABC transmembrane type-1 domain. A helical transmembrane segment spans residues 103–123 (ITSMVWAVIFGMAAGIIAAVW). Over 124-134 (RNRWPDRLSMT) the chain is Cytoplasmic. Residues 135–155 (IAVSGISFPAFALGMLLIQVF) form a helical membrane-spanning segment. Topologically, residues 156–168 (SVELGWLPTVGAD) are periplasmic. The helical transmembrane segment at 169-189 (SWQHYILPSLTLGAAVAAVMA) threads the bilayer. Topologically, residues 190–228 (RFTRASFVDVLSEDYMRTARAKGVSETWVVLKHGLRNAM) are cytoplasmic. Residues 229 to 249 (IPVVTMMGLQFGFLLGGSIVV) form a helical membrane-spanning segment. Residues 250–277 (EKVFNWPGLGRLLVDSVEMRDYPVIQAE) are Periplasmic-facing. The helical transmembrane segment at 278-298 (ILLFSLEFILINLVVDVLYAA) threads the bilayer. Residues 299-306 (INPAIRYK) lie on the Cytoplasmic side of the membrane.

Belongs to the binding-protein-dependent transport system permease family. In terms of assembly, the complex is composed of two ATP-binding proteins (GsiA), two transmembrane proteins (GsiC and GsiD) and a solute-binding protein (GsiB).

The protein resides in the cell inner membrane. Functionally, part of the ABC transporter complex GsiABCD involved in glutathione import. Probably responsible for the translocation of the substrate across the membrane. The polypeptide is Glutathione transport system permease protein GsiC (Escherichia coli O6:H1 (strain CFT073 / ATCC 700928 / UPEC)).